The following is a 421-amino-acid chain: Telomeric repeat-binding factor 1 (421 aa).

The disordered stretch occupies residues M1–G30. At A2 the chain carries N-acetylalanine. Residues E49–K255 are TRFH mediates dimerization. Residue K200 forms a Glycyl lysine isopeptide (Lys-Gly) (interchain with G-Cter in SUMO2) linkage. The residue at position 206 (S206) is a Phosphoserine; by ATM. Positions E252–R365 are interaction with RLIM. Positions N253–D266 are enriched in basic and acidic residues. The tract at residues N253 to K366 is disordered. The segment covering V284–S310 has biased composition (polar residues). The Nuclear localization signal signature appears at K313–R367. The HTH myb-type domain maps to S362–L419. Residues W390–K415 constitute a DNA-binding region (H-T-H motif).

In terms of assembly, homodimer; can contain both isoforms. Found in a complex with POT1; TINF2 and TNKS1. Interacts with ATM, TINF2, TNKS1, TNKS2, PINX1, NEK2 and MAPRE1. Component of the shelterin complex (telosome) composed of TERF1, TERF2, TINF2, TERF2IP ACD and POT1. Interacts with RLIM (via N-terminus). Interacts with FBXO4. Interaction with TINF2 protects against interaction with FBXO4 and subsequent polyubiquitination and proteasomal degradation. Interacts with GNL3L; this interaction promotes homodimerization. Interacts with TIN2. Interactions with GNL3L and TIN2 are mutually exclusive. Interacts with RTEL1. Interacts with CCDC79/TERB1. In terms of processing, phosphorylated preferentially on Ser-219 in an ATM-dependent manner in response to ionizing DNA damage. ADP-ribosylation by TNKS1 or TNKS2 diminishes its ability to bind to telomeric DNA. Post-translationally, ubiquitinated by RLIM/RNF12, leading to its degradation by the proteasome. Ubiquitinated by a SCF (SKP1-CUL1-F-box protein) ubiquitin-protein ligase complex, leading to its degradation by the proteasome.

It localises to the nucleus. It is found in the chromosome. The protein resides in the telomere. Its subcellular location is the cytoplasm. The protein localises to the cytoskeleton. It localises to the spindle. In terms of biological role, binds the telomeric double-stranded 5'-TTAGGG-3' repeat and negatively regulates telomere length. Involved in the regulation of the mitotic spindle. Component of the shelterin complex (telosome) that is involved in the regulation of telomere length and protection. Shelterin associates with arrays of double-stranded 5'-TTAGGG-3' repeats added by telomerase and protects chromosome ends; without its protective activity, telomeres are no longer hidden from the DNA damage surveillance and chromosome ends are inappropriately processed by DNA repair pathways. The protein is Telomeric repeat-binding factor 1 (Terf1) of Mus musculus (Mouse).